The chain runs to 947 residues: Regulator of spindle assembly protein 2 (947 aa).

Disordered stretches follow at residues 20 to 148 (EKPA…LSEQ) and 173 to 211 (SPHEARQQTIQESSEQLEPRAKVTRSSSQPPPIDTLKPR). Composition is skewed to basic and acidic residues over residues 30-50 (PKYRDHHEKIRNKENMEEGEK) and 62-84 (TREDYERYDEDRRLKDKARDLRI). Polar residues-rich tracts occupy residues 90–102 (SATPEASPSSDQY) and 179–188 (QQTIQESSEQ). Residues 276-320 (IIAEEAKKRRNEAEAVRKLIEVETQNAKKRAVIQELKDRIDKLTQ) adopt a coiled-coil conformation. 4 disordered regions span residues 407 to 453 (KINP…RRIG), 575 to 594 (ERESMEAQESESESMELEIP), 600 to 662 (SVTT…GLII), and 681 to 705 (EQSLEEELEPRGNNDSADDSGFLLD). A compositionally biased stretch (low complexity) spans 411 to 422 (SSQLNQQSSSDA). The span at 430 to 449 (EASTQMTSRLAESAMTQTSP) shows a compositional bias: polar residues. A coiled-coil region spans residues 563–591 (AGLSHYLEQVKKERESMEAQESESESMEL). Over residues 580-590 (EAQESESESME) the composition is skewed to acidic residues. Over residues 645-657 (FEHEIEEHKEPEK) the composition is skewed to basic and acidic residues.

In terms of assembly, interacts with phosphatase regulatory subunit rsa-1 and tpxl-1. May interact with spd-5. May interact with sys-1.

The protein localises to the cytoplasm. Its subcellular location is the cytoskeleton. It is found in the microtubule organizing center. It localises to the centrosome. Recruits rsa-1 and, thereby, phosphatase let-92/paa-1 complex to the centrosomes. Recruits sys-1/beta-catenin to mitotic centrosomes during the first embryonic cell divisions. The polypeptide is Regulator of spindle assembly protein 2 (Caenorhabditis elegans).